A 211-amino-acid polypeptide reads, in one-letter code: Thymidylate kinase (211 aa).

11–18 is a binding site for ATP; the sequence is GPDGAGKT.

It belongs to the thymidylate kinase family.

The catalysed reaction is dTMP + ATP = dTDP + ADP. Functionally, phosphorylation of dTMP to form dTDP in both de novo and salvage pathways of dTTP synthesis. This Streptococcus equi subsp. zooepidemicus (strain H70) protein is Thymidylate kinase.